The chain runs to 71 residues: uncharacterized protein (71 aa).

Residues 24–44 (FGGGGLSTAIYSIFAFFSIPL) traverse the membrane as a helical segment.

The protein localises to the membrane. This is an uncharacterized protein from Schizosaccharomyces pombe (strain 972 / ATCC 24843) (Fission yeast).